The sequence spans 256 residues: Ribonuclease T2 (256 aa).

Residues 1–24 form the signal peptide; it reads MRPAALRGALLGCLCLALLCLGGA. Cys48 and Cys55 are disulfide-bonded. Residue His65 is part of the active site. 3 disulfides stabilise this stretch: Cys75–Cys121, Cys184–Cys241, and Cys202–Cys213. 2 N-linked (GlcNAc...) asparagine glycosylation sites follow: Asn76 and Asn106. Residues Glu114 and His118 contribute to the active site. Residue Asn212 is glycosylated (N-linked (GlcNAc...) asparagine).

It belongs to the RNase T2 family. Ubiquitous. Higher expression levels observed in the temporal lobe and fetal brain.

Its subcellular location is the secreted. It localises to the lysosome lumen. It is found in the endoplasmic reticulum lumen. The protein localises to the mitochondrion intermembrane space. It carries out the reaction a ribonucleotidyl-ribonucleotide-RNA + H2O = a 3'-end 3'-phospho-ribonucleotide-RNA + a 5'-end dephospho-ribonucleoside-RNA + H(+). The catalysed reaction is an adenylyl-uridine-RNA = a 3'-end 2',3'-cyclophospho-AMP-RNA + a 5'-end dephospho-uridine-RNA. It catalyses the reaction a guanylyl-uridine-RNA = a 3'-end 2',3'-cyclophospho-GMP-RNA + a 5'-end dephospho-uridine-RNA. Its activity is regulated as follows. Inhibited by Zn(2+) and Cu(2+). In terms of biological role, ribonuclease that plays an essential role in innate immune response by recognizing and degrading RNAs from microbial pathogens that are subsequently sensed by TLR8. Cleaves preferentially single-stranded RNA molecules between purine and uridine residues, which critically contributes to the supply of catabolic uridine and the generation of purine-2',3'-cyclophosphate-terminated oligoribonucleotides. In turn, RNase T2 degradation products promote the RNA-dependent activation of TLR8. In plasmacytoid dendritic cells, it cooperates with PLD3 or PLD4 5'-&gt;3' exonucleases to process RNA fragments and release 2',3'-cyclic guanosine monophosphate (2',3'-cGMP), a potent stimulatory ligand for TLR7. Also plays a key role in degradation of mitochondrial RNA and processing of non-coding RNA imported from the cytosol into mitochondria. Participates as well in degradation of mitochondrion-associated cytosolic rRNAs. The polypeptide is Ribonuclease T2 (RNASET2) (Homo sapiens (Human)).